We begin with the raw amino-acid sequence, 307 residues long: Ribosomal RNA small subunit methyltransferase H (307 aa).

S-adenosyl-L-methionine is bound by residues 32-34 (GGH), Asp52, Phe78, Asp100, and Gln107.

Belongs to the methyltransferase superfamily. RsmH family.

It localises to the cytoplasm. The catalysed reaction is cytidine(1402) in 16S rRNA + S-adenosyl-L-methionine = N(4)-methylcytidine(1402) in 16S rRNA + S-adenosyl-L-homocysteine + H(+). Its function is as follows. Specifically methylates the N4 position of cytidine in position 1402 (C1402) of 16S rRNA. This is Ribosomal RNA small subunit methyltransferase H from Coxiella burnetii (strain CbuG_Q212) (Coxiella burnetii (strain Q212)).